A 677-amino-acid chain; its full sequence is Transketolase 1 (677 aa).

Histidine 27 serves as a coordination point for substrate. Thiamine diphosphate-binding positions include histidine 66 and 114–116 (GPL). Residue aspartate 155 participates in Mg(2+) binding. Residues glycine 156 and asparagine 185 each contribute to the thiamine diphosphate site. Asparagine 185 and isoleucine 187 together coordinate Mg(2+). Residues histidine 261, arginine 356, and serine 383 each coordinate substrate. Residue histidine 261 coordinates thiamine diphosphate. Thiamine diphosphate-binding residues include glutamate 415 and phenylalanine 442. Glutamate 415 functions as the Proton donor in the catalytic mechanism. The substrate site is built by histidine 466, aspartate 474, and arginine 525.

The protein belongs to the transketolase family. As to quaternary structure, homodimer. Mg(2+) serves as cofactor. The cofactor is Ca(2+). Mn(2+) is required as a cofactor. Requires Co(2+) as cofactor. It depends on thiamine diphosphate as a cofactor.

It catalyses the reaction D-sedoheptulose 7-phosphate + D-glyceraldehyde 3-phosphate = aldehydo-D-ribose 5-phosphate + D-xylulose 5-phosphate. Its function is as follows. Catalyzes the transfer of a two-carbon ketol group from a ketose donor to an aldose acceptor, via a covalent intermediate with the cofactor thiamine pyrophosphate. The sequence is that of Transketolase 1 (TKT1) from Candida albicans (Yeast).